The following is a 242-amino-acid chain: Biosynthetic peptidoglycan transglycosylase (242 aa).

A helical membrane pass occupies residues 19 to 39 (ILAALAVFWGGGIALFSVVPV).

Belongs to the glycosyltransferase 51 family.

It localises to the cell inner membrane. It carries out the reaction [GlcNAc-(1-&gt;4)-Mur2Ac(oyl-L-Ala-gamma-D-Glu-L-Lys-D-Ala-D-Ala)](n)-di-trans,octa-cis-undecaprenyl diphosphate + beta-D-GlcNAc-(1-&gt;4)-Mur2Ac(oyl-L-Ala-gamma-D-Glu-L-Lys-D-Ala-D-Ala)-di-trans,octa-cis-undecaprenyl diphosphate = [GlcNAc-(1-&gt;4)-Mur2Ac(oyl-L-Ala-gamma-D-Glu-L-Lys-D-Ala-D-Ala)](n+1)-di-trans,octa-cis-undecaprenyl diphosphate + di-trans,octa-cis-undecaprenyl diphosphate + H(+). It functions in the pathway cell wall biogenesis; peptidoglycan biosynthesis. Its function is as follows. Peptidoglycan polymerase that catalyzes glycan chain elongation from lipid-linked precursors. This chain is Biosynthetic peptidoglycan transglycosylase, found in Salmonella agona (strain SL483).